The primary structure comprises 341 residues: Anthranilate phosphoribosyltransferase (341 aa).

Residues Gly-79, 82 to 83 (GD), Thr-87, 89 to 92 (NIST), 107 to 115 (KHGNRAVSS), and Ser-119 each bind 5-phospho-alpha-D-ribose 1-diphosphate. Position 79 (Gly-79) interacts with anthranilate. Position 91 (Ser-91) interacts with Mg(2+). Position 110 (Asn-110) interacts with anthranilate. Residue Arg-165 participates in anthranilate binding. Residues Asp-224 and Glu-225 each coordinate Mg(2+).

It belongs to the anthranilate phosphoribosyltransferase family. Homodimer. Mg(2+) is required as a cofactor.

It catalyses the reaction N-(5-phospho-beta-D-ribosyl)anthranilate + diphosphate = 5-phospho-alpha-D-ribose 1-diphosphate + anthranilate. Its pathway is amino-acid biosynthesis; L-tryptophan biosynthesis; L-tryptophan from chorismate: step 2/5. In terms of biological role, catalyzes the transfer of the phosphoribosyl group of 5-phosphorylribose-1-pyrophosphate (PRPP) to anthranilate to yield N-(5'-phosphoribosyl)-anthranilate (PRA). This is Anthranilate phosphoribosyltransferase from Bacillus cereus (strain B4264).